The following is a 445-amino-acid chain: 6-phosphogluconate dehydrogenase, decarboxylating (445 aa).

NADP(+) is bound by residues alanine 1–glycine 4, asparagine 22–serine 24, valine 63–alanine 65, and asparagine 91. Substrate is bound by residues asparagine 91 and serine 117 to glycine 119. Lysine 172 acts as the Proton acceptor in catalysis. Histidine 175–asparagine 176 is a binding site for substrate. The Proton donor role is filled by glutamate 179. Substrate is bound by residues tyrosine 180, lysine 249, arginine 276, arginine 434, and histidine 440.

It belongs to the 6-phosphogluconate dehydrogenase family. In terms of assembly, homodimer.

It catalyses the reaction 6-phospho-D-gluconate + NADP(+) = D-ribulose 5-phosphate + CO2 + NADPH. Its pathway is carbohydrate degradation; pentose phosphate pathway; D-ribulose 5-phosphate from D-glucose 6-phosphate (oxidative stage): step 3/3. Catalyzes the oxidative decarboxylation of 6-phosphogluconate to ribulose 5-phosphate and CO(2), with concomitant reduction of NADP to NADPH. The sequence is that of 6-phosphogluconate dehydrogenase, decarboxylating (gnd) from Shigella dysenteriae.